The sequence spans 394 residues: Actin-related protein 2 (394 aa).

Met1 carries the N-acetylmethionine modification. Residues 160–162 and 214–218 contribute to the ATP site; these read GDG and RMIKE. Lys299 carries the N6-acetyllysine modification. 305 to 310 is a binding site for ATP; that stretch reads GGSTMY. The residue at position 322 (Lys322) is an N6-acetyllysine.

Belongs to the actin family. ARP2 subfamily. Component of the Arp2/3 complex composed of ACTR2/ARP2, ACTR3/ARP3, ARPC1B/p41-ARC, ARPC2/p34-ARC, ARPC3/p21-ARC, ARPC4/p20-ARC and ARPC5/p16-ARC. Interacts with AVIL.

It localises to the cytoplasm. The protein localises to the cytoskeleton. It is found in the cell projection. Its subcellular location is the nucleus. In terms of biological role, ATP-binding component of the Arp2/3 complex, a multiprotein complex that mediates actin polymerization upon stimulation by nucleation-promoting factor (NPF). The Arp2/3 complex mediates the formation of branched actin networks in the cytoplasm, providing the force for cell motility. Seems to contact the pointed end of the daughter actin filament. In podocytes, required for the formation of lamellipodia downstream of AVIL and PLCE1 regulation. In addition to its role in the cytoplasmic cytoskeleton, the Arp2/3 complex also promotes actin polymerization in the nucleus, thereby regulating gene transcription and repair of damaged DNA. The Arp2/3 complex promotes homologous recombination (HR) repair in response to DNA damage by promoting nuclear actin polymerization, leading to drive motility of double-strand breaks (DSBs). The sequence is that of Actin-related protein 2 (ACTR2) from Bos taurus (Bovine).